Reading from the N-terminus, the 3066-residue chain is Serine-protein kinase ATM (3066 aa).

Position 2 is an N-acetylserine (serine 2). Serine 367 carries the phosphoserine; by autocatalysis modification. The segment at 829-862 is disordered; the sequence is LDHGVHPGEDDEDGGGCDSLMEAEGPSSTGLSTA. The tract at residues 1380 to 1389 is interaction with ABL1; sequence DPAPNPPYFP. Serine 1899 bears the Phosphoserine; by autocatalysis mark. The 631-residue stretch at 1946-2576 folds into the FAT domain; that stretch reads EVAKVAQSCS…LFIILALANA (631 aa). Over residues 1973–1982 the composition is skewed to basic and acidic residues; the sequence is TDEQEKRSPT. Disordered regions lie at residues 1973–2000 and 2585–2607; these read TDEQ…EKSK and PETT…LDED. The span at 1985 to 1996 shows a compositional bias: polar residues; the sequence is EGSQGTTISSLS. At serine 1987 the chain carries Phosphoserine; by autocatalysis. The span at 2597–2607 shows a compositional bias: basic and acidic residues; it reads TSKENSHLDED. The PI3K/PI4K catalytic domain occupies 2696 to 3009; that stretch reads FKTEFRLAGG…ECKQSLSDTD (314 aa). The segment at 2702 to 2708 is G-loop; the sequence is LAGGLNL. The catalytic loop stretch occupies residues 2877–2885; it reads GLGDRHVQN. The activation loop stretch occupies residues 2897–2921; that stretch reads HIDLGVAFEQGKILPTPETVPFRLS. The segment at 2986–3007 is disordered; the sequence is DESDLHSTPNADDQECKQSLSD. Polar residues predominate over residues 2991 to 3007; that stretch reads HSTPNADDQECKQSLSD. Serine 3006 bears the Phosphoserine mark. N6-acetyllysine is present on lysine 3026. In terms of domain architecture, FATC spans 3034–3066; the sequence is TVLSVGGQVNLLIQQAMDPKNLSRLFPGWKAWV. A Microbody targeting signal; atypical motif is present at residues 3056 to 3058; that stretch reads SRL.

Belongs to the PI3/PI4-kinase family. ATM subfamily. In terms of assembly, homodimer. Dimers or tetramers in inactive state. On DNA damage, autophosphorylation dissociates ATM into monomers rendering them catalytically active. Binds p53/TP53, ABL1, BRCA1 and TERF1. Interacts with NBN (via FxF/Y motif). Part of the BRCA1-associated genome surveillance complex (BASC), which contains BRCA1, MSH2, MSH6, MLH1, ATM, BLM, PMS2 and the RAD50-MRE11-NBN protein complex. This association could be a dynamic process changing throughout the cell cycle and within subnuclear domains. Interacts with RAD17; DNA damage promotes the association. Interacts with EEF1E1; the interaction, induced on DNA damage, up-regulates TP53. Interacts with KAT8, NABP2, ATMIN and CEP164. Interacts with AP2B1 and AP3B2; the interaction occurs in cytoplasmic vesicles. Interacts with TELO2 and TTI1. Interacts with DDX1. Interacts with BRAT1. Interacts with CYREN (via XLF motif). Interacts (via microbody targeting signal) with PEX5; promoting translocation to peroxisomes in response to reactive oxygen species (ROS). In terms of processing, phosphorylated by NUAK1/ARK5. Autophosphorylation on Ser-367, Ser-1899, Ser-1987 correlates with DNA damage-mediated activation of the kinase. Phosphorylated by NUAK1/ARK5. Autophosphorylation on Ser-367, Ser-1899, Ser-1987 correlates with DNA damage-mediated activation of the kinase. During the late stages of DNA damage response, dephosphorylated following deacetylation by SIRT7, leading to ATM deactivation. Post-translationally, acetylation, on DNA damage, is required for activation of the kinase activity, dimer-monomer transition, and subsequent autophosphorylation on Ser-1987. Acetylated in vitro by KAT5/TIP60. Deacetylated by SIRT7 during the late stages of DNA damage response, promoting ATM dephosphorylation and subsequent deactivation. Expressed in brain, skeletal muscle, testis, followed by spleen, lung, kidney, heart, liver and thymus. Ubiquitously expressed in embryonal tissues.

Its subcellular location is the nucleus. The protein resides in the cytoplasmic vesicle. It localises to the cytoplasm. The protein localises to the cytoskeleton. It is found in the microtubule organizing center. Its subcellular location is the centrosome. The protein resides in the peroxisome matrix. The enzyme catalyses L-seryl-[protein] + ATP = O-phospho-L-seryl-[protein] + ADP + H(+). It carries out the reaction L-threonyl-[protein] + ATP = O-phospho-L-threonyl-[protein] + ADP + H(+). Activated by the MRN (MRE11-RAD50-NBS1) complex in response to DNA double strand breaks (DSBs), which recruits ATM to DSBs and promotes its activation. Inhibited by wortmannin. In terms of biological role, serine/threonine protein kinase which activates checkpoint signaling upon double strand breaks (DSBs), apoptosis and genotoxic stresses such as ionizing ultraviolet A light (UVA), thereby acting as a DNA damage sensor. Recognizes the substrate consensus sequence [ST]-Q. Phosphorylates 'Ser-139' of histone variant H2AX at double strand breaks (DSBs), thereby regulating DNA damage response mechanism. Also plays a role in pre-B cell allelic exclusion, a process leading to expression of a single immunoglobulin heavy chain allele to enforce clonality and monospecific recognition by the B-cell antigen receptor (BCR) expressed on individual B-lymphocytes. After the introduction of DNA breaks by the RAG complex on one immunoglobulin allele, acts by mediating a repositioning of the second allele to pericentromeric heterochromatin, preventing accessibility to the RAG complex and recombination of the second allele. Also involved in signal transduction and cell cycle control. May function as a tumor suppressor. Necessary for activation of ABL1 and SAPK. Phosphorylates DYRK2, CHEK2, p53/TP53, FBXW7, FANCD2, NFKBIA, BRCA1, CREBBP/CBP, RBBP8/CTIP, FBXO46, MRE11, nibrin (NBN), RAD50, RAD17, PELI1, TERF1, UFL1, RAD9, UBQLN4 and DCLRE1C. May play a role in vesicle and/or protein transport. Could play a role in T-cell development, gonad and neurological function. Binds DNA ends. Plays a role in replication-dependent histone mRNA degradation. Phosphorylation of DYRK2 in nucleus in response to genotoxic stress prevents its MDM2-mediated ubiquitination and subsequent proteasome degradation. Phosphorylates ATF2 which stimulates its function in DNA damage response. Phosphorylates ERCC6 which is essential for its chromatin remodeling activity at DNA double-strand breaks. Phosphorylates TTC5/STRAP at 'Ser-203' in the cytoplasm in response to DNA damage, which promotes TTC5/STRAP nuclear localization. Also involved in pexophagy by mediating phosphorylation of PEX5: translocated to peroxisomes in response to reactive oxygen species (ROS), and catalyzes phosphorylation of PEX5, promoting PEX5 ubiquitination and induction of pexophagy. The protein is Serine-protein kinase ATM (Atm) of Mus musculus (Mouse).